A 188-amino-acid polypeptide reads, in one-letter code: RWD domain-containing protein 4 (188 aa).

The 103-residue stretch at 9–111 (MELEALRSIY…EYAKDHKEQF (103 aa)) folds into the RWD domain. The segment at 132–167 (TPTTAPSSKKKEKKEQLSKAQKRKLADKTDHKGELP) is disordered. Residues 155 to 166 (KLADKTDHKGEL) show a composition bias toward basic and acidic residues.

The chain is RWD domain-containing protein 4 (Rwdd4) from Mus musculus (Mouse).